A 194-amino-acid polypeptide reads, in one-letter code: Adenylate kinase isoenzyme 1 (194 aa).

Met-1 is modified (N-acetylmethionine). An ATP-binding site is contributed by 18-23; it reads GSGKGT. Ser-38 carries the phosphoserine modification. The tract at residues 38-67 is NMP; the sequence is STGDLLRAEVSSGSARGKMLSEIMEKGQLV. AMP contacts are provided by residues Thr-39, Arg-44, 65-67, 94-97, and Gln-101; these read QLV and GYPR. The LID stretch occupies residues 131–141; it reads KRGETSGRVDD. Arg-132 contributes to the ATP binding site. Arg-138 and Arg-149 together coordinate AMP. Gly-177 serves as a coordination point for ATP.

Belongs to the adenylate kinase family. AK1 subfamily. As to quaternary structure, monomer. Mg(2+) serves as cofactor.

The protein localises to the cytoplasm. It carries out the reaction a ribonucleoside 5'-phosphate + ATP = a ribonucleoside 5'-diphosphate + ADP. The enzyme catalyses AMP + ATP = 2 ADP. It catalyses the reaction dAMP + ATP = dADP + ADP. The catalysed reaction is dATP + AMP = dADP + ADP. It carries out the reaction dAMP + dATP = 2 dADP. The enzyme catalyses a 2'-deoxyribonucleoside 5'-diphosphate + ATP = a 2'-deoxyribonucleoside 5'-triphosphate + ADP. It catalyses the reaction a ribonucleoside 5'-diphosphate + ATP = a ribonucleoside 5'-triphosphate + ADP. The catalysed reaction is CDP + GTP = CTP + GDP. It carries out the reaction GDP + ATP = GTP + ADP. The enzyme catalyses UDP + ATP = UTP + ADP. It catalyses the reaction GTP + UDP = UTP + GDP. The catalysed reaction is dTDP + GTP = dTTP + GDP. It carries out the reaction dCDP + GTP = dCTP + GDP. The enzyme catalyses dGDP + ATP = dGTP + ADP. It catalyses the reaction dADP + GTP = dATP + GDP. The catalysed reaction is thiamine diphosphate + ADP = thiamine triphosphate + AMP. Catalyzes the reversible transfer of the terminal phosphate group between ATP and AMP. Also displays broad nucleoside diphosphate kinase activity. Plays an important role in cellular energy homeostasis and in adenine nucleotide metabolism. Also catalyzes at a very low rate the synthesis of thiamine triphosphate (ThTP) from thiamine diphosphate (ThDP) and ADP. In Bos taurus (Bovine), this protein is Adenylate kinase isoenzyme 1.